The sequence spans 501 residues: Ribose import ATP-binding protein RbsA (501 aa).

ABC transporter domains are found at residues 5 to 241 (LQLK…VGRK) and 252 to 495 (APGE…VGKL). Residue 37-44 (GENGAGKS) participates in ATP binding.

The protein belongs to the ABC transporter superfamily. Ribose importer (TC 3.A.1.2.1) family. In terms of assembly, the complex is composed of an ATP-binding protein (RbsA), two transmembrane proteins (RbsC) and a solute-binding protein (RbsB).

Its subcellular location is the cell inner membrane. The catalysed reaction is D-ribose(out) + ATP + H2O = D-ribose(in) + ADP + phosphate + H(+). In terms of biological role, part of the ABC transporter complex RbsABC involved in ribose import. Responsible for energy coupling to the transport system. The chain is Ribose import ATP-binding protein RbsA from Salmonella typhimurium (strain LT2 / SGSC1412 / ATCC 700720).